The chain runs to 84 residues: Large ribosomal subunit protein bL27 (84 aa).

Belongs to the bacterial ribosomal protein bL27 family.

This is Large ribosomal subunit protein bL27 from Karelsulcia muelleri (strain GWSS) (Sulcia muelleri).